We begin with the raw amino-acid sequence, 142 residues long: Putative pre-16S rRNA nuclease (142 aa).

The protein belongs to the YqgF nuclease family.

Its subcellular location is the cytoplasm. Could be a nuclease involved in processing of the 5'-end of pre-16S rRNA. This is Putative pre-16S rRNA nuclease from Ruminiclostridium cellulolyticum (strain ATCC 35319 / DSM 5812 / JCM 6584 / H10) (Clostridium cellulolyticum).